We begin with the raw amino-acid sequence, 371 residues long: MSDLPRISVAAPRLDGNERDYVLECMDTTWISSVGRFIVEFEKAFADYCGVKHAIACNNGTTALHLALVAMGIGPGDEVIVPSLTYIASANSVTYCGATPVLVDNDPRTFNLDAAKLEALITPRTKAIMPVHLYGQICDMDPILEVARRHNLLVIEDAAEAVGATYRGKKSGSLGDCATFSFFGNKIITTGEGGMITTNDDDLAAKMRLLRGQGMDPNRRYWFPIVGFNYRMTNIQAAIGLAQLERVDEHLAARERVVGWYEQKLARLGNRVTKPHVALTGRHVFWMYTVRLGEGLSTTRDQVIKDLDALGIESRPVFHPMHIMPPYAHLATDDLKIAEACGVDGLNLPTHAGLTEADIDRVIAALDQVLV.

Lys186 bears the N6-(pyridoxal phosphate)lysine mark.

The protein belongs to the DegT/DnrJ/EryC1 family. In terms of assembly, homodimer. It depends on pyridoxal 5'-phosphate as a cofactor.

It carries out the reaction GDP-alpha-D-perosamine + 2-oxoglutarate = GDP-4-dehydro-alpha-D-rhamnose + L-glutamate. It participates in bacterial outer membrane biogenesis; LPS O-antigen biosynthesis. Functionally, catalyzes the synthesis of GDP-perosamine from GDP-4-keto-6-deoxy-D-mannose and L-glutamate. Can use only L-glutamate as amino donor. In vitro, can also use GDP-4-keto-3,6-dideoxymannose to produce GDP-3-deoxyperosamine. Involved in the formation of S-LPS, which is required for attachment of the protein S-layer to the outer membrane surface. In Caulobacter vibrioides (strain ATCC 19089 / CIP 103742 / CB 15) (Caulobacter crescentus), this protein is GDP-perosamine synthase.